A 1642-amino-acid chain; its full sequence is Coiled-coil domain-containing protein 7A (1642 aa).

The disordered stretch occupies residues 21–51 (PYKKGLLNSSPKPKEKHNAKSKYGKNESMVL). The LRR 1 repeat unit spans residues 161–184 (VNQMEEISKDQSNLEELQSDGKTA). The stretch at 279-330 (LEKALNDQQTIESKYKQLETDFQMLIMEKTLLEAEIRRLREIERVKSAAKEE) forms a coiled coil. An LRR 2 repeat occupies 1310–1333 (IKELSKTLNLDGGDIELSDFVFKT).

As to expression, exclusively expressed in the testes.

The chain is Coiled-coil domain-containing protein 7A from Mus musculus (Mouse).